Here is a 139-residue protein sequence, read N- to C-terminus: Cuticle protein 76 (139 aa).

6 consecutive repeat copies span residues Ala7–Ala10, Ala68–Ala71, Ala75–Val78, Ala93–Pro95, Ala105–Ala108, and Ala121–Ala124.

In terms of biological role, component of the cuticle of migratory locust which contains more than 100 different structural proteins. The protein is Cuticle protein 76 of Locusta migratoria (Migratory locust).